Reading from the N-terminus, the 541-residue chain is Light-independent protochlorophyllide reductase subunit B (541 aa).

Asp36 is a [4Fe-4S] cluster binding site. Asp286 functions as the Proton donor in the catalytic mechanism. 421-422 provides a ligand contact to substrate; sequence GM.

It belongs to the ChlB/BchB/BchZ family. As to quaternary structure, protochlorophyllide reductase is composed of three subunits; BchL, BchN and BchB. Forms a heterotetramer of two BchB and two BchN subunits. [4Fe-4S] cluster serves as cofactor.

It catalyses the reaction chlorophyllide a + oxidized 2[4Fe-4S]-[ferredoxin] + 2 ADP + 2 phosphate = protochlorophyllide a + reduced 2[4Fe-4S]-[ferredoxin] + 2 ATP + 2 H2O. It participates in porphyrin-containing compound metabolism; bacteriochlorophyll biosynthesis (light-independent). Its function is as follows. Component of the dark-operative protochlorophyllide reductase (DPOR) that uses Mg-ATP and reduced ferredoxin to reduce ring D of protochlorophyllide (Pchlide) to form chlorophyllide a (Chlide). This reaction is light-independent. The NB-protein (BchN-BchB) is the catalytic component of the complex. This is Light-independent protochlorophyllide reductase subunit B from Chloroflexus aurantiacus (strain ATCC 29364 / DSM 637 / Y-400-fl).